Reading from the N-terminus, the 389-residue chain is MGNPEASCTPPAVLGSQTGLPHANVSAPPNNCSAPSHIYQDSIALPWKVLLVVLLALITLATTLSNAFVIATVYRTRKLHTPANYLIASLAFTDLLVSILVMPISTMYTVTGRWTLGQALCDFWLSSDITCCTASIMHLCVIALDRYWAITDAVGYSAKRTPRRAAGMIALVWVFSICISLPPFFWRQAKAEEEVLDCLVNTDHVLYTVYSTGGAFYLPTLLLIALYGRIYVEARSRILKQTPNKTGKRLTRAQLITDSPGSTSSVTSINSRAPEVPCDSGSPVYVNQVKVRVSDALLEKKKLMAARERKATKTLGVILGAFIVCWLPFFIISLVMPICKDACWFHMAIFDFFTWLGYLNSLINPIIYTMSNEDFKQAFHKLIRFKCTT.

Over 1–45 (MGNPEASCTPPAVLGSQTGLPHANVSAPPNNCSAPSHIYQDSIAL) the chain is Extracellular. N-linked (GlcNAc...) asparagine glycosylation is found at asparagine 24 and asparagine 31. A helical membrane pass occupies residues 46 to 71 (PWKVLLVVLLALITLATTLSNAFVIA). Over 72–85 (TVYRTRKLHTPANY) the chain is Cytoplasmic. The chain crosses the membrane as a helical span at residues 86–110 (LIASLAFTDLLVSILVMPISTMYTV). The Extracellular segment spans residues 111-118 (TGRWTLGQ). The chain crosses the membrane as a helical span at residues 119–144 (ALCDFWLSSDITCCTASIMHLCVIAL). A disulfide bond links cysteine 121 and cysteine 198. Ergotamine-binding residues include aspartate 128 and threonine 133. Residues 145 to 147 (DRY) carry the DRY motif; important for ligand-induced conformation changes and signaling motif. Residues 145–164 (DRYWAITDAVGYSAKRTPRR) lie on the Cytoplasmic side of the membrane. Residues 165-183 (AAGMIALVWVFSICISLPP) form a helical membrane-spanning segment. The Extracellular portion of the chain corresponds to 184-204 (FFWRQAKAEEEVLDCLVNTDH). Residue valine 200 coordinates ergotamine. Residues 205-228 (VLYTVYSTGGAFYLPTLLLIALYG) traverse the membrane as a helical segment. The Cytoplasmic segment spans residues 229 to 314 (RIYVEARSRI…AARERKATKT (86 aa)). Residues 315–336 (LGVILGAFIVCWLPFFIISLVM) traverse the membrane as a helical segment. Over 337-346 (PICKDACWFH) the chain is Extracellular. A helical transmembrane segment spans residues 347-369 (MAIFDFFTWLGYLNSLINPIIYT). The NPxxY motif; important for ligand-induced conformation changes and signaling motif lies at 364–368 (NPIIY). Residues 370–389 (MSNEDFKQAFHKLIRFKCTT) are Cytoplasmic-facing. A lipid anchor (S-palmitoyl cysteine) is attached at cysteine 387.

It belongs to the G-protein coupled receptor 1 family. As to quaternary structure, homodimer. Heterodimer with HTR1D. In terms of processing, phosphorylated. Desensitization of the receptor may be mediated by its phosphorylation. Palmitoylated.

It is found in the cell membrane. In terms of biological role, G-protein coupled receptor for 5-hydroxytryptamine (serotonin). Also functions as a receptor for ergot alkaloid derivatives, various anxiolytic and antidepressant drugs and other psychoactive substances, such as lysergic acid diethylamide (LSD). Ligand binding causes a conformation change that triggers signaling via guanine nucleotide-binding proteins (G proteins) and modulates the activity of downstream effectors, such as adenylate cyclase. HTR1B is coupled to G(i)/G(o) G alpha proteins and mediates inhibitory neurotransmission by inhibiting adenylate cyclase activity. Arrestin family members inhibit signaling via G proteins and mediate activation of alternative signaling pathways. Regulates the release of 5-hydroxytryptamine, dopamine and acetylcholine in the brain, and thereby affects neural activity, nociceptive processing, pain perception, mood and behavior. Besides, plays a role in vasoconstriction of cerebral arteries. This chain is 5-hydroxytryptamine receptor 1B (HTR1B), found in Cavia porcellus (Guinea pig).